A 378-amino-acid chain; its full sequence is Mating-type protein MAT-1 (378 aa).

Positions 60 to 117 (KARKALNAFVGFRCYYITIPMFKPWPMKKLSNLIGLLWEADPNKSLWSLMAKPWSTIR) form a DNA-binding region, alpha box.

It belongs to the MATALPHA1 family.

Its subcellular location is the nucleus. Functionally, mating type proteins are sequence specific DNA-binding proteins that act as master switches in fungal differentiation by controlling gene expression in a cell type-specific fashion. Transcriptional activator that induces the transcription of alpha-specific genes. This Cochliobolus sativus (Common root rot and spot blotch fungus) protein is Mating-type protein MAT-1 (MAT1).